The chain runs to 306 residues: 4-diphosphocytidyl-2-C-methyl-D-erythritol kinase (306 aa).

The active site involves lysine 11. 113–123 contributes to the ATP binding site; sequence PPEGGIGGGSS. Residue aspartate 153 is part of the active site.

This sequence belongs to the GHMP kinase family. IspE subfamily.

The catalysed reaction is 4-CDP-2-C-methyl-D-erythritol + ATP = 4-CDP-2-C-methyl-D-erythritol 2-phosphate + ADP + H(+). It participates in isoprenoid biosynthesis; isopentenyl diphosphate biosynthesis via DXP pathway; isopentenyl diphosphate from 1-deoxy-D-xylulose 5-phosphate: step 3/6. Its function is as follows. Catalyzes the phosphorylation of the position 2 hydroxy group of 4-diphosphocytidyl-2C-methyl-D-erythritol. The chain is 4-diphosphocytidyl-2-C-methyl-D-erythritol kinase from Leptospira biflexa serovar Patoc (strain Patoc 1 / ATCC 23582 / Paris).